The following is a 393-amino-acid chain: Thyrotropin-releasing hormone receptor (393 aa).

Topologically, residues 1–28 (MENDTVSEMNQTELQPQAAVALEYQVVT) are extracellular. Asparagine 3 and asparagine 10 each carry an N-linked (GlcNAc...) asparagine glycan. Residues 29–51 (ILLVVIICGLGIVGNIMVVLVVM) traverse the membrane as a helical segment. Residues 52–61 (RTKHMRTPTN) are Cytoplasmic-facing. A helical transmembrane segment spans residues 62 to 83 (CYLVSLAVADLMVLVAAGLPNI). At 84-99 (TDSIYGSWVYGYVGCL) the chain is on the extracellular side. A disulfide bond links cysteine 98 and cysteine 179. The helical transmembrane segment at 100 to 121 (CITYLQYLGINASSCSITAFTI) threads the bilayer. Topologically, residues 122-144 (ERYIAICHPIKAQFLCTFSRAKK) are cytoplasmic. Residues 145 to 168 (IIIFVWAFTSIYCMLWFFLLDLNI) form a helical membrane-spanning segment. Residues 169–193 (STYKNAVVVSCGYKISRNYYSPIYL) lie on the Extracellular side of the membrane. A helical membrane pass occupies residues 194–215 (MDFGVFYVVPMILATVLYGFIA). The Cytoplasmic portion of the chain corresponds to 216–266 (RILFLNPIPSDPKENSKMWKNDSIHQNKNLNLNATNRCFNSTVSSRKQVTK). Residues 267 to 288 (MLAVVVILFALLWMPYRTLVVV) traverse the membrane as a helical segment. Over 289–296 (NSFLSSPF) the chain is Extracellular. A helical membrane pass occupies residues 297–319 (QENWFLLFCRICIYLNSAINPVI). The Cytoplasmic segment spans residues 320-393 (YNLMSQKFRA…FDDTCLASEN (74 aa)).

Belongs to the G-protein coupled receptor 1 family.

The protein resides in the cell membrane. In terms of biological role, receptor for thyrotropin-releasing hormone (TRH). Upon ligand binding, this G-protein-coupled receptor triggers activation of the phosphatidylinositol (IP3)-calcium-protein kinase C (PKC) pathway. The chain is Thyrotropin-releasing hormone receptor (Trhr) from Mus musculus (Mouse).